Here is a 198-residue protein sequence, read N- to C-terminus: Protein uvp1 (198 aa).

One can recognise a Resolvase/invertase-type recombinase catalytic domain in the interval 1-140 (MIIGYARKST…SGLAAARARG (140 aa)). Serine 9 functions as the O-(5'-phospho-DNA)-serine intermediate in the catalytic mechanism. Residues 168–187 (VGAVAKRFNVSRMTIYRYTT) constitute a DNA-binding region (H-T-H motif).

The protein belongs to the site-specific recombinase resolvase family.

Its function is as follows. Cooperates with the mucAB genes in the DNA repair process. Could be a resolvase-invertase protein. This is Protein uvp1 (uvp1) from Escherichia coli.